The following is a 649-amino-acid chain: MAQYGHPSPLGMAAREELYSKVTPRRNRQQRPGTIKHGSALDVLLSMGFPRARAQKALASTGGRSVQAACDWLFSHVGDPFLDDPLPREYVLYLRPTGPLAQKLSDFWQQSKQICGKNKAHNIFPHITLCQFFMCEDSKVDALGEALQTTVSRWKCKFSAPLPLELYTSSNFIGLFVKEDSAEVLKKFAADFAAEAASKTEVHVEPHKKQLHVTLAYHFQASHLPTLEKLAQNIDVKLGCDWVATIFSRDIRFANHETLQVIYPYTPQNDDELELVPGDFIFMSPMEQTSTSEGWIYGTSLTTGCSGLLPENYITKADECSTWIFHGSYSILNTSSSNSLTFGDGVLERRPYEDQGLGETTPLTIICQPMQPLRVNSQPGPQKRCLFVCRHGERMDVVFGKYWLSQCFDAKGRYIRTNLNMPHSLPQRSGGFRDYEKDAPITVFGCMQARLVGEALLESNTIIDHVYCSPSLRCVQTAHNILKGLQQENHLKIRVEPGLFEWTKWVAGSTLPAWIPPSELAAANLSVDTTYRPHIPISKLVVSESYDTYISRSFQVTKEIISECKSKGNNILIVAHASSLEACTCQLQGLSPQNSKDFVQMVRKIPYLGFCSCEELGETGIWQLTDPPILPLTHGPTGGFNWRETLLQE.

Residue serine 20 is modified to Phosphoserine. Threonine 23 is modified (phosphothreonine). Positions asparagine 27–histidine 76 constitute a UBA domain. The region spanning alanine 254–glutamate 319 is the SH3 domain. The tract at residues glycine 380 to glutamate 649 is protein tyrosine phosphatase. Arginine 390 is an active-site residue. Histidine 391 (tele-phosphohistidine intermediate) is an active-site residue. Histidine 576 is a catalytic residue.

In terms of assembly, homodimer. Interacts with JAK2 (in vitro). Interacts with CBL. Part of a complex containing CBL and activated EGFR. Interacts with ubiquitin and with mono-ubiquitinated proteins. Interacts with ZAP70 (ubiquitinated form).

The protein resides in the cytoplasm. The protein localises to the nucleus. The enzyme catalyses O-phospho-L-tyrosyl-[protein] + H2O = L-tyrosyl-[protein] + phosphate. In terms of biological role, interferes with CBL-mediated down-regulation and degradation of receptor-type tyrosine kinases. Promotes accumulation of activated target receptors, such as T-cell receptors and EGFR, on the cell surface. Exhibits tyrosine phosphatase activity toward several substrates including EGFR, FAK, SYK, and ZAP70. Down-regulates proteins that are dually modified by both protein tyrosine phosphorylation and ubiquitination. The sequence is that of Ubiquitin-associated and SH3 domain-containing protein B (UBASH3B) from Homo sapiens (Human).